Here is a 278-residue protein sequence, read N- to C-terminus: Thiazole synthase (278 aa).

Residue Lys-109 is the Schiff-base intermediate with DXP of the active site. 1-deoxy-D-xylulose 5-phosphate-binding positions include Gly-170, 197-198 (AG), and 219-220 (NT).

The protein belongs to the ThiG family. Homotetramer. Forms heterodimers with either ThiH or ThiS.

The protein resides in the cytoplasm. It carries out the reaction [ThiS sulfur-carrier protein]-C-terminal-Gly-aminoethanethioate + 2-iminoacetate + 1-deoxy-D-xylulose 5-phosphate = [ThiS sulfur-carrier protein]-C-terminal Gly-Gly + 2-[(2R,5Z)-2-carboxy-4-methylthiazol-5(2H)-ylidene]ethyl phosphate + 2 H2O + H(+). It functions in the pathway cofactor biosynthesis; thiamine diphosphate biosynthesis. Catalyzes the rearrangement of 1-deoxy-D-xylulose 5-phosphate (DXP) to produce the thiazole phosphate moiety of thiamine. Sulfur is provided by the thiocarboxylate moiety of the carrier protein ThiS. In vitro, sulfur can be provided by H(2)S. This Cupriavidus necator (strain ATCC 17699 / DSM 428 / KCTC 22496 / NCIMB 10442 / H16 / Stanier 337) (Ralstonia eutropha) protein is Thiazole synthase.